A 720-amino-acid chain; its full sequence is ABC transporter G family member STR2 (720 aa).

Topologically, residues 1-467 (MRHANGRRGD…NFINIRRTPE (467 aa)) are cytoplasmic. In terms of domain architecture, ABC transporter spans 25-274 (LEFSNLTYTV…LGRMGRKVPK (250 aa)). Position 70 to 77 (70 to 77 (GPSGAGKS)) interacts with ATP. The interval 313–346 (GAHEMSIVPPSPAPSHREGRGHDRSNKRLHLKDQ) is disordered. Residues 327-346 (SHREGRGHDRSNKRLHLKDQ) show a composition bias toward basic and acidic residues. The helical transmembrane segment at 468–488 (LFLSRLVVLTVMGIMMATMFM) threads the bilayer. Residues 489–502 (HPKKNLQGITNRLS) lie on the Extracellular side of the membrane. Residues 503-523 (FFIFTVCLFFFSSNDAVPAFI) form a helical membrane-spanning segment. The Cytoplasmic segment spans residues 524–547 (QERFIFVRETSHNKYRASSYTIAG). The helical transmembrane segment at 548 to 568 (LITYLPFLAVQAAVYAVIVWF) threads the bilayer. The Extracellular portion of the chain corresponds to 569-575 (ALSLRGP). A helical transmembrane segment spans residues 576–596 (FIYFLIVLYMSLLSTNSFVVF). The Cytoplasmic segment spans residues 597-604 (VSSVVPNY). Residues 605-625 (ILGYAAVIAFTALFFLFCGYF) traverse the membrane as a helical segment. Residues 626 to 693 (LNSHDMPQYW…QVESKKWEKV (68 aa)) lie on the Extracellular side of the membrane. The N-linked (GlcNAc...) asparagine glycan is linked to Asn681. Residues 694 to 714 (YIMLAWAIVYRILFYIVLRFF) traverse the membrane as a helical segment. Over 715–720 (SKNQRT) the chain is Cytoplasmic.

It belongs to the ABC transporter superfamily. ABCG family. Stunted arbuscule (STR) subfamily. In terms of assembly, heterodimerizes with STR; the resulting transporter is located in the peri-arbuscular membrane.

It localises to the cell membrane. Together with STR, required for arbuscule development in arbuscular mycorrhizal (AM) symbiosis. This chain is ABC transporter G family member STR2, found in Petunia hybrida (Petunia).